The sequence spans 509 residues: Hyaluronidase PH-20 (509 aa).

The signal sequence occupies residues 1–35; sequence MGVLKFKHIFFRSFVKSSGVSQIVFTFLLIPCCLT. 2 cysteine pairs are disulfide-bonded: Cys60–Cys351 and Cys224–Cys238. An N-linked (GlcNAc...) asparagine glycan is attached at Asn82. The Proton donor role is filled by Glu148. N-linked (GlcNAc...) asparagine glycans are attached at residues Asn166, Asn235, Asn254, and Asn368. 3 disulfides stabilise this stretch: Cys376/Cys387, Cys381/Cys435, and Cys437/Cys464. The N-linked (GlcNAc...) asparagine glycan is linked to Asn393. Ser490 carries GPI-anchor amidated serine lipidation. The propeptide at 491 to 509 is removed in mature form; the sequence is ATMFIVSILFLIISSVASL.

It belongs to the glycosyl hydrolase 56 family. N-glycosylated. As to expression, testis.

Its subcellular location is the cell membrane. It catalyses the reaction Random hydrolysis of (1-&gt;4)-linkages between N-acetyl-beta-D-glucosamine and D-glucuronate residues in hyaluronate.. Its function is as follows. Involved in sperm-egg adhesion. Upon fertilization sperm must first penetrate a layer of cumulus cells that surrounds the egg before reaching the zona pellucida. The cumulus cells are embedded in a matrix containing hyaluronic acid which is formed prior to ovulation. This protein aids in penetrating the layer of cumulus cells by digesting hyaluronic acid. This is Hyaluronidase PH-20 (SPAM1) from Homo sapiens (Human).